A 382-amino-acid chain; its full sequence is Bifunctional enzyme IspD/IspF (382 aa).

The 2-C-methyl-D-erythritol 4-phosphate cytidylyltransferase stretch occupies residues 1–226; that stretch reads MTLAVLIVAA…RSTMDNIPDI (226 aa). Residues 227 to 382 are 2-C-methyl-D-erythritol 2,4-cyclodiphosphate synthase; the sequence is RLGNGYDVHR…ALATATLVRA (156 aa). A divalent metal cation-binding residues include Asp233 and His235. Residues 233–235 and 259–260 each bind 4-CDP-2-C-methyl-D-erythritol 2-phosphate; these read DVH and HS. Residue His267 coordinates a divalent metal cation. 4-CDP-2-C-methyl-D-erythritol 2-phosphate is bound by residues 281–283, 357–360, Phe364, and Arg367; these read DIG and TTSE.

It in the N-terminal section; belongs to the IspD/TarI cytidylyltransferase family. IspD subfamily. In the C-terminal section; belongs to the IspF family. The cofactor is a divalent metal cation.

The enzyme catalyses 2-C-methyl-D-erythritol 4-phosphate + CTP + H(+) = 4-CDP-2-C-methyl-D-erythritol + diphosphate. It carries out the reaction 4-CDP-2-C-methyl-D-erythritol 2-phosphate = 2-C-methyl-D-erythritol 2,4-cyclic diphosphate + CMP. The protein operates within isoprenoid biosynthesis; isopentenyl diphosphate biosynthesis via DXP pathway; isopentenyl diphosphate from 1-deoxy-D-xylulose 5-phosphate: step 2/6. Its pathway is isoprenoid biosynthesis; isopentenyl diphosphate biosynthesis via DXP pathway; isopentenyl diphosphate from 1-deoxy-D-xylulose 5-phosphate: step 4/6. Functionally, bifunctional enzyme that catalyzes the formation of 4-diphosphocytidyl-2-C-methyl-D-erythritol from CTP and 2-C-methyl-D-erythritol 4-phosphate (MEP) (IspD), and catalyzes the conversion of 4-diphosphocytidyl-2-C-methyl-D-erythritol 2-phosphate (CDP-ME2P) to 2-C-methyl-D-erythritol 2,4-cyclodiphosphate (ME-CPP) with a corresponding release of cytidine 5-monophosphate (CMP) (IspF). This Ruegeria sp. (strain TM1040) (Silicibacter sp.) protein is Bifunctional enzyme IspD/IspF.